A 150-amino-acid polypeptide reads, in one-letter code: Large ribosomal subunit protein uL15 (150 aa).

Positions 1 to 58 are disordered; that stretch reads MNLSGIKPPKGQVKTKKRIGRGMGSGHGKTATRGSKGQHAGTGFSQKRGFEGGQMPLH.

Belongs to the universal ribosomal protein uL15 family. In terms of assembly, part of the 50S ribosomal subunit.

Binds to the 23S rRNA. This is Large ribosomal subunit protein uL15 from Solibacter usitatus (strain Ellin6076).